A 986-amino-acid polypeptide reads, in one-letter code: Epidermin biosynthesis protein EpiB (986 aa).

The protein to B.subtilis SpaB and L.lactis NisB.

The protein resides in the cell membrane. Its function is as follows. Involved in the post-translational modification of the lantibiotic epidermin. This chain is Epidermin biosynthesis protein EpiB (epiB), found in Staphylococcus epidermidis.